A 207-amino-acid polypeptide reads, in one-letter code: Small ribosomal subunit protein uS4 (207 aa).

The region spanning 96-156 (RRLDNVVYRL…EKFKTSSFIA (61 aa)) is the S4 RNA-binding domain.

It belongs to the universal ribosomal protein uS4 family. As to quaternary structure, part of the 30S ribosomal subunit. Contacts protein S5. The interaction surface between S4 and S5 is involved in control of translational fidelity.

Its function is as follows. One of the primary rRNA binding proteins, it binds directly to 16S rRNA where it nucleates assembly of the body of the 30S subunit. With S5 and S12 plays an important role in translational accuracy. The protein is Small ribosomal subunit protein uS4 of Leptospira interrogans serogroup Icterohaemorrhagiae serovar copenhageni (strain Fiocruz L1-130).